The sequence spans 463 residues: Oxidoreductase OXR1 (463 aa).

Residues 59 to 63, Val154, and Asp366 contribute to the 6-hydroxy-FAD site; that span reads GGSYS.

Belongs to the FAD-dependent oxidoreductase family. Requires 6-hydroxy-FAD as cofactor.

It participates in siderophore biosynthesis. Functionally, oxidoreductase; part of the gene cluster that mediates the biosynthesis of hydroxamate-containing siderophores that play a critical role in virulence via intracellular iron acquisition during macrophage infection. The chain is Oxidoreductase OXR1 from Ajellomyces capsulatus (Darling's disease fungus).